We begin with the raw amino-acid sequence, 296 residues long: Polyamine aminopropyltransferase (296 aa).

The PABS domain maps to 16–251; the sequence is HLWYFEYYTG…GMWSYTFASK (236 aa). Gln46 provides a ligand contact to S-methyl-5'-thioadenosine. His77 and Asp101 together coordinate spermidine. Residues Glu121 and 152–153 each bind S-methyl-5'-thioadenosine; that span reads NG. Asp170 acts as the Proton acceptor in catalysis. Spermidine is bound at residue 170 to 173; it reads DSTD.

This sequence belongs to the spermidine/spermine synthase family. As to quaternary structure, homodimer or homotetramer.

The protein localises to the cytoplasm. It carries out the reaction S-adenosyl 3-(methylsulfanyl)propylamine + putrescine = S-methyl-5'-thioadenosine + spermidine + H(+). It participates in amine and polyamine biosynthesis; spermidine biosynthesis; spermidine from putrescine: step 1/1. In terms of biological role, catalyzes the irreversible transfer of a propylamine group from the amino donor S-adenosylmethioninamine (decarboxy-AdoMet) to putrescine (1,4-diaminobutane) to yield spermidine. The protein is Polyamine aminopropyltransferase of Thermotoga petrophila (strain ATCC BAA-488 / DSM 13995 / JCM 10881 / RKU-1).